We begin with the raw amino-acid sequence, 106 residues long: Toxin-like structure LSTX-D5 (106 aa).

Residues 1–20 (MMKVLVVVALLVTLISYSSS) form the signal peptide. A propeptide spanning residues 21–41 (EGIDDLETDELLSLMANEQTR) is cleaved from the precursor. 4 cysteine pairs are disulfide-bonded: C45–C60, C52–C69, C59–C85, and C71–C83.

This sequence belongs to the neurotoxin 19 (CSTX) family. 02 (D7) subfamily. In terms of tissue distribution, expressed by the venom gland.

It is found in the secreted. The protein is Toxin-like structure LSTX-D5 of Lycosa singoriensis (Wolf spider).